We begin with the raw amino-acid sequence, 351 residues long: Phenylalanine--tRNA ligase alpha subunit (351 aa).

The interval 45 to 69 is disordered; it reads LGDDAPIPAARRSLGSLPKDQRKDA. Glutamate 269 provides a ligand contact to Mg(2+).

The protein belongs to the class-II aminoacyl-tRNA synthetase family. Phe-tRNA synthetase alpha subunit type 1 subfamily. As to quaternary structure, tetramer of two alpha and two beta subunits. It depends on Mg(2+) as a cofactor.

It is found in the cytoplasm. It carries out the reaction tRNA(Phe) + L-phenylalanine + ATP = L-phenylalanyl-tRNA(Phe) + AMP + diphosphate + H(+). The sequence is that of Phenylalanine--tRNA ligase alpha subunit from Corynebacterium jeikeium (strain K411).